A 949-amino-acid polypeptide reads, in one-letter code: Thrombospondin-4-B (949 aa).

The N-terminal stretch at 1–22 (MAGTMHLLTAVSLILMLSSANA) is a signal peptide. A Laminin G-like domain is found at 23–198 (ESTVYNLLTS…LEELKLAYGD (176 aa)). Disulfide bonds link C276-C287, C281-C296, C299-C310, C316-C327, C321-C336, C339-C363, C369-C383, C377-C392, C395-C407, C413-C427, C421-C437, C439-C450, C466-C471, C476-C496, C512-C532, C535-C555, C571-C591, C594-C614, C632-C652, C672-C692, and C708-C929. An EGF-like 1; calcium-binding domain is found at 312–349 (DVDECQFNPCFPGVRCVNMAPGFRCEACPLGFTGKPLE). An EGF-like 2; calcium-binding domain is found at 365-408 (DIDECKGPDNGGCTANSICVNSVGSYQCGRCKTGFTGDQIRGCK). In terms of domain architecture, EGF-like 3 spans 409–451 (PEKSCGNRLQNPCDPNAQCTEERDGTITCQCGIGWAGNGYLCG). TSP type-3 repeat units lie at residues 452 to 484 (KDTDIDGYPDERLRCRDPTCRKDNCVTVPNSGQ), 485 to 520 (EDADGDGKGDACDPDADGDGILNEQDNCWLTPNINQ), 521 to 543 (QNSDKDSHGDACDNCVRVDNPDQ), 544 to 579 (RDTDSDGLGDACDDDMDGDGLKNFLDNCQRVKNRDQ), 580 to 602 (LDRDGDGVGDACDSCPDIPNPNQ), 603 to 640 (SDIDNDLVGDSCDTNQDSDGDGHQDSKDNCPMVINSSQ), 641 to 680 (LDTDKDGIGDECDDDDDNDGIPDSLPPGPDNCRLVPNPEQ), and 681 to 716 (IDDNNDGVGDICESDFDQDKVIDRIDNCPENAEITL). A disordered region spans residues 578-671 (DQLDRDGDGV…PDSLPPGPDN (94 aa)). N-linked (GlcNAc...) asparagine glycans are attached at residues N601 and N637. The span at 649–660 (GDECDDDDDNDG) shows a compositional bias: acidic residues. A TSP C-terminal domain is found at 720 to 934 (RAYQTVVLDP…LKYRCNDTIP (215 aa)). N-linked (GlcNAc...) asparagine glycosylation is present at N930.

It belongs to the thrombospondin family. As to quaternary structure, homotrimer; disulfide-linked.

The protein localises to the endoplasmic reticulum. It localises to the sarcoplasmic reticulum. Its subcellular location is the secreted. It is found in the extracellular space. The protein resides in the extracellular matrix. Its function is as follows. Adhesive glycoprotein that mediates cell-to-cell and cell-to-matrix interactions and may be involved in various processes including cellular proliferation, migration, adhesion and attachment. May play a role in ER stress response. The chain is Thrombospondin-4-B (thbs4b) from Danio rerio (Zebrafish).